Here is a 142-residue protein sequence, read N- to C-terminus: Large ribosomal subunit protein uL11 (142 aa).

The protein belongs to the universal ribosomal protein uL11 family. Part of the ribosomal stalk of the 50S ribosomal subunit. Interacts with L10 and the large rRNA to form the base of the stalk. L10 forms an elongated spine to which L12 dimers bind in a sequential fashion forming a multimeric L10(L12)X complex. One or more lysine residues are methylated.

Forms part of the ribosomal stalk which helps the ribosome interact with GTP-bound translation factors. This chain is Large ribosomal subunit protein uL11, found in Mycobacterium sp. (strain JLS).